A 322-amino-acid polypeptide reads, in one-letter code: Hydrolase C26A3.11 (322 aa).

A CN hydrolase domain is found at phenylalanine 44 to proline 290. Residue glutamate 83 is the Proton acceptor of the active site. Lysine 154 functions as the Proton donor in the catalytic mechanism. The active-site Nucleophile is the cysteine 195.

This sequence belongs to the carbon-nitrogen hydrolase superfamily. NIT1/NIT2 family.

This Schizosaccharomyces pombe (strain 972 / ATCC 24843) (Fission yeast) protein is Hydrolase C26A3.11.